A 1329-amino-acid chain; its full sequence is GRB10-interacting GYF protein 2 (1329 aa).

Disordered regions lie at residues 109–184 and 236–419; these read RGGG…AHFP and NERW…RTTL. Basic and acidic residues-rich tracts occupy residues 150-177 and 251-271; these read GGRE…KDPD and GWRE…ERSG. The segment covering 293 to 302 has biased composition (acidic residues); sequence CLEDAEEETG. Residues 316-338 are compositionally biased toward basic and acidic residues; sequence RALEKAPKEPILEEAELDFRPLE. Acidic residues predominate over residues 339–351; the sequence is ENDEYAEKDDSET. A compositionally biased stretch (basic and acidic residues) spans 352-376; the sequence is EQTKDTDTNTRHESDRNEENCKSEE. The span at 377–397 shows a compositional bias: low complexity; sequence PSPVAVPFSAVVTPPKATTPA. The span at 403–415 shows a compositional bias: basic and acidic residues; sequence HLEKAEDKERPSE. One can recognise a GYF domain in the interval 556-604; that stretch reads AFKWFYKDPQGEIQGPFNNQEMSEWFQAGYFTMTLQVKRGCDEMFQPLG. Positions 720–732 are enriched in polar residues; that stretch reads QNPSTQASCSPNM. Disordered stretches follow at residues 720–740, 781–1081, 1122–1155, 1236–1256, and 1279–1302; these read QNPS…PSTW, LRAK…QNRA, EAAP…SKKV, AKQN…QQES, and QQQQ…MVRA. A compositionally biased stretch (basic and acidic residues) spans 781–896; the sequence is LRAKREEEER…RREEEKRLEE (116 aa). Low complexity predominate over residues 899-908; it reads AAAAAALLRQ. Positions 909 to 928 are enriched in basic and acidic residues; that stretch reads QQEEQKKREQEAQRQQELQR. Residues 929-951 are compositionally biased toward low complexity; it reads QRQQQQEALRRLQQQQQQQQLAQ. The span at 954-966 shows a compositional bias: polar residues; that stretch reads LPSSSKWGQQSTT. Residues 967–980 show a composition bias toward low complexity; that stretch reads ANSLSQSQNALSLA. Residues 983–1001 show a composition bias toward basic and acidic residues; sequence QKLEEERERQTREEQRRQQ. Residues 1002-1013 show a composition bias toward low complexity; it reads QELQRVQQQQPQ. Positions 1035 to 1049 are enriched in basic and acidic residues; the sequence is IQREEAQQMKQRKDQ. Polar residues predominate over residues 1068–1081; sequence HSTNTQQNRTQNRA. Residues 1239-1254 show a composition bias toward low complexity; it reads NDNQQKPQQGQQQKQQ.

It belongs to the GIGYF family. In terms of assembly, component of the 4EHP-GYF2 complex.

Functionally, key component of the 4EHP-GYF2 complex, a multiprotein complex that acts as a repressor of translation initiation. In association with EIF4E2, assists ribosome-associated quality control (RQC) by sequestering the mRNA cap, blocking ribosome initiation and decreasing the translational load on problematic messages. This is GRB10-interacting GYF protein 2 (gigyf2) from Danio rerio (Zebrafish).